The chain runs to 194 residues: ATP-dependent Clp protease proteolytic subunit (194 aa).

Catalysis depends on S98, which acts as the Nucleophile. The active site involves H123.

The protein belongs to the peptidase S14 family. As to quaternary structure, fourteen ClpP subunits assemble into 2 heptameric rings which stack back to back to give a disk-like structure with a central cavity, resembling the structure of eukaryotic proteasomes.

It is found in the cytoplasm. The catalysed reaction is Hydrolysis of proteins to small peptides in the presence of ATP and magnesium. alpha-casein is the usual test substrate. In the absence of ATP, only oligopeptides shorter than five residues are hydrolyzed (such as succinyl-Leu-Tyr-|-NHMec, and Leu-Tyr-Leu-|-Tyr-Trp, in which cleavage of the -Tyr-|-Leu- and -Tyr-|-Trp bonds also occurs).. Cleaves peptides in various proteins in a process that requires ATP hydrolysis. Has a chymotrypsin-like activity. Plays a major role in the degradation of misfolded proteins. The polypeptide is ATP-dependent Clp protease proteolytic subunit (Clostridium botulinum (strain Hall / ATCC 3502 / NCTC 13319 / Type A)).